Consider the following 269-residue polypeptide: WW domain-binding protein 1 (269 aa).

2 consecutive short sequence motifs (PPxY motif) follow at residues 124-127 (PPAY) and 137-141 (PPPPY). 2 disordered regions span residues 169–203 (EGTNVEGVSSHQSAPPHQEGEPGAGVTPASTPPSC) and 249–269 (PPESVPQIFPMGLSSSEGDIP). The segment covering 174 to 183 (EGVSSHQSAP) has biased composition (polar residues).

As to quaternary structure, interacts with NEDD4. Binds to the WW domain of YAP1, WWP1 and WWP2. Interacts with WWOX. In terms of tissue distribution, expressed in most tissues but at significantly lower levels in placenta, lung, liver, and kidney.

This Homo sapiens (Human) protein is WW domain-binding protein 1 (WBP1).